A 328-amino-acid chain; its full sequence is Transcription initiation factor TFIID subunit 8 (328 aa).

The region spanning 16–83 (RRILNKVVSQ…DVSLALINMG (68 aa)) is the Histone-fold domain. The tract at residues 229 to 309 (NRTEDEPSKD…PGTMPSRSLA (81 aa)) is disordered. Phosphoserine occurs at positions 236, 245, and 255. A compositionally biased stretch (acidic residues) spans 239 to 251 (DGEEGDSENEEMD). Basic and acidic residues predominate over residues 252–264 (GDKSKEEKPELDI). Polar residues predominate over residues 296–309 (NCPTPGTMPSRSLA).

This sequence belongs to the TAF8 family. Belongs to the TFIID complex which is composed of TATA binding protein (Tbp) and a number of TBP-associated factors (TAFs). Histone fold interacts with N-terminus of Taf10b.

The protein localises to the nucleus. TFIID is a multimeric protein complex that plays a central role in mediating promoter responses to various activators and repressors. The protein is Transcription initiation factor TFIID subunit 8 of Drosophila melanogaster (Fruit fly).